The sequence spans 474 residues: Ubiquinol-cytochrome-c reductase complex core protein 2, mitochondrial (474 aa).

The transit peptide at 1 to 42 directs the protein to the mitochondrion; sequence MKSVVRSKGTQALFRRFSSALGDSINPNQVGVGDNVIRVNGR.

This sequence belongs to the peptidase M16 family. UQCRC2/QCR2 subfamily. As to quaternary structure, component of the ubiquinol-cytochrome c oxidoreductase (cytochrome b-c1 complex, complex III, CIII), a multisubunit enzyme composed of 3 respiratory subunits cytochrome b, cytochrome c1 and Rieske protein, 2 core protein subunits, and additional low-molecular weight protein subunits. The complex exists as an obligatory dimer and forms supercomplexes (SCs) in the inner mitochondrial membrane with cytochrome c oxidase (complex IV, CIV).

The protein resides in the mitochondrion inner membrane. Component of the ubiquinol-cytochrome c oxidoreductase, a multisubunit transmembrane complex that is part of the mitochondrial electron transport chain which drives oxidative phosphorylation. The respiratory chain contains 3 multisubunit complexes succinate dehydrogenase (complex II, CII), ubiquinol-cytochrome c oxidoreductase (cytochrome b-c1 complex, complex III, CIII) and cytochrome c oxidase (complex IV, CIV), that cooperate to transfer electrons derived from NADH and succinate to molecular oxygen, creating an electrochemical gradient over the inner membrane that drives transmembrane transport and the ATP synthase. The cytochrome b-c1 complex catalyzes electron transfer from ubiquinol to cytochrome c, linking this redox reaction to translocation of protons across the mitochondrial inner membrane, with protons being carried across the membrane as hydrogens on the quinol. In the process called Q cycle, 2 protons are consumed from the matrix, 4 protons are released into the intermembrane space and 2 electrons are passed to cytochrome c. The protein is Ubiquinol-cytochrome-c reductase complex core protein 2, mitochondrial of Euglena gracilis.